Consider the following 186-residue polypeptide: Adenine phosphoribosyltransferase (186 aa).

Belongs to the purine/pyrimidine phosphoribosyltransferase family. Homodimer.

It is found in the cytoplasm. It carries out the reaction AMP + diphosphate = 5-phospho-alpha-D-ribose 1-diphosphate + adenine. Its pathway is purine metabolism; AMP biosynthesis via salvage pathway; AMP from adenine: step 1/1. Functionally, catalyzes a salvage reaction resulting in the formation of AMP, that is energically less costly than de novo synthesis. The polypeptide is Adenine phosphoribosyltransferase (Xanthomonas campestris pv. campestris (strain B100)).